A 29-amino-acid polypeptide reads, in one-letter code: Cyclotide cter-N (29 aa).

The segment at residues 1-29 (GSAFCGETCVLGTCYTPDCSCTALVCLKN) is a cross-link (cyclopeptide (Gly-Asn)). 3 disulfide bridges follow: C5–C19, C9–C21, and C14–C26.

This is a cyclic peptide.

Its subcellular location is the secreted. In terms of biological role, probably participates in a plant defense mechanism. The polypeptide is Cyclotide cter-N (Clitoria ternatea (Butterfly pea)).